Consider the following 190-residue polypeptide: Potassium-transporting ATPase KdpC subunit (190 aa).

A helical membrane pass occupies residues 6 to 26; it reads PAVFLVLLLTLITGLLYPLLT. The disordered stretch occupies residues 67 to 88; that stretch reads GRPSATSDRPYNPLASSGSNLA. Polar residues predominate over residues 69 to 88; that stretch reads PSATSDRPYNPLASSGSNLA.

The protein belongs to the KdpC family. As to quaternary structure, the system is composed of three essential subunits: KdpA, KdpB and KdpC.

The protein resides in the cell inner membrane. Part of the high-affinity ATP-driven potassium transport (or Kdp) system, which catalyzes the hydrolysis of ATP coupled with the electrogenic transport of potassium into the cytoplasm. This subunit acts as a catalytic chaperone that increases the ATP-binding affinity of the ATP-hydrolyzing subunit KdpB by the formation of a transient KdpB/KdpC/ATP ternary complex. This is Potassium-transporting ATPase KdpC subunit from Erwinia tasmaniensis (strain DSM 17950 / CFBP 7177 / CIP 109463 / NCPPB 4357 / Et1/99).